Consider the following 647-residue polypeptide: Acetyl-coenzyme A synthetase (647 aa).

Residues 190–193 (RGGR), threonine 308, and asparagine 332 each bind CoA. ATP-binding positions include 384–386 (GEP), 408–413 (DTWWQT), aspartate 497, and arginine 512. Serine 520 provides a ligand contact to CoA. Arginine 523 serves as a coordination point for ATP. Positions 534, 536, and 539 each coordinate Mg(2+). A CoA-binding site is contributed by arginine 581. Lysine 606 carries the N6-acetyllysine modification.

It belongs to the ATP-dependent AMP-binding enzyme family. The cofactor is Mg(2+). In terms of processing, acetylated. Deacetylation by the SIR2-homolog deacetylase activates the enzyme.

It catalyses the reaction acetate + ATP + CoA = acetyl-CoA + AMP + diphosphate. Its function is as follows. Catalyzes the conversion of acetate into acetyl-CoA (AcCoA), an essential intermediate at the junction of anabolic and catabolic pathways. AcsA undergoes a two-step reaction. In the first half reaction, AcsA combines acetate with ATP to form acetyl-adenylate (AcAMP) intermediate. In the second half reaction, it can then transfer the acetyl group from AcAMP to the sulfhydryl group of CoA, forming the product AcCoA. This Parvibaculum lavamentivorans (strain DS-1 / DSM 13023 / NCIMB 13966) protein is Acetyl-coenzyme A synthetase.